A 470-amino-acid polypeptide reads, in one-letter code: Glutamyl-tRNA reductase (470 aa).

Substrate-binding positions include 49-52 (TCNR), Ser-109, 114-116 (ESQ), and Gln-120. Residue Cys-50 is the Nucleophile of the active site. Residue 223 to 228 (GAGAVG) coordinates NADP(+).

Belongs to the glutamyl-tRNA reductase family. As to quaternary structure, homodimer.

The catalysed reaction is (S)-4-amino-5-oxopentanoate + tRNA(Glu) + NADP(+) = L-glutamyl-tRNA(Glu) + NADPH + H(+). It functions in the pathway porphyrin-containing compound metabolism; protoporphyrin-IX biosynthesis; 5-aminolevulinate from L-glutamyl-tRNA(Glu): step 1/2. Its function is as follows. Catalyzes the NADPH-dependent reduction of glutamyl-tRNA(Glu) to glutamate 1-semialdehyde (GSA). In Frankia alni (strain DSM 45986 / CECT 9034 / ACN14a), this protein is Glutamyl-tRNA reductase.